We begin with the raw amino-acid sequence, 414 residues long: MNRQSWLLNLSLLKTHPAFRAVFLARFISIVSLGLLGVAVPVQIQMMTHSTWQVGLSVTLTGGAMFIGLMVGGVLADRYERKKVILLARGTCGIGFIGLCVNALLPEPSLLAIYLLGLWDGFFASLGVTALLAATPALVGRENLMQAGAITMLTVRLGSVISPMLGGILLASGGVAWNYGLAAAGTFITLLPLLTLPRLPVPPQPRENPFIALLAAFRFLLASPLIGGIALLGGLVTMASAVRVLYPALAMSWQMSAAQIGLLYAAIPLGAAIGALTSGQLAHSVRPGLIMLVSTVGSFLAVGLFAIMPVWIAGVICLALFGWLSAISSLLQYTLLQTQTPENMLGRMNGLWTAQNVTGDAIGAALLGGLGAMMTPVASASVSGFGLVIIGLLLLLVLGELRRFRQTPPVSDAG.

Residues Met-1 to Ala-21 lie on the Cytoplasmic side of the membrane. Residues Val-22 to Val-42 traverse the membrane as a helical segment. Over Gln-43–Gly-55 the chain is Periplasmic. A helical transmembrane segment spans residues Leu-56–Ala-76. The Cytoplasmic segment spans residues Asp-77–Lys-83. The chain crosses the membrane as a helical span at residues Val-84–Leu-104. The Periplasmic portion of the chain corresponds to Leu-105 to Ser-109. Residues Leu-110–Ala-130 traverse the membrane as a helical segment. The Cytoplasmic portion of the chain corresponds to Leu-131–Arg-156. The helical transmembrane segment at Leu-157–Trp-177 threads the bilayer. A topological domain (periplasmic) is located at residue Asn-178. Residues Tyr-179–Leu-199 form a helical membrane-spanning segment. The Cytoplasmic segment spans residues Pro-200 to Arg-218. Residues Phe-219–Ala-239 traverse the membrane as a helical segment. Residues Ser-240 to Ser-256 lie on the Periplasmic side of the membrane. The chain crosses the membrane as a helical span at residues Ala-257 to Thr-277. Over Ser-278–Pro-287 the chain is Cytoplasmic. A helical transmembrane segment spans residues Gly-288 to Ile-307. Residues Met-308–Ala-313 lie on the Periplasmic side of the membrane. Residues Gly-314 to Leu-336 form a helical membrane-spanning segment. Residues Gln-337–Asn-356 lie on the Cytoplasmic side of the membrane. A helical transmembrane segment spans residues Val-357–Val-377. Residue Ala-378 is a topological domain, periplasmic. A helical transmembrane segment spans residues Ser-379–Gly-399. The Cytoplasmic segment spans residues Glu-400–Gly-414.

This sequence belongs to the major facilitator superfamily. EntS (TC 2.A.1.38) family.

It localises to the cell inner membrane. Functionally, component of an export pathway for enterobactin. This is Enterobactin exporter EntS from Salmonella typhimurium (strain LT2 / SGSC1412 / ATCC 700720).